Consider the following 486-residue polypeptide: Ammonium transporter 2 member 1 (486 aa).

11 consecutive transmembrane segments (helical) span residues 29–49 (ASTLVGIQSMPGLVVLYGSIV), 57–77 (SAFMALYAYASSLLVWVLVGF), 127–147 (LVLFQFEFAAITLVLLAGSVL), 161–181 (LWLLLSYTVGAFSLWGGGFLY), 190–210 (GGYVIHLSSGIAGFTAAYWVG), 225–245 (ILLMIAGGGLLWMGWAGFNGG), 252–272 (IAASVAVLNTNVCAATSLLMW), 285–305 (VIGAVQGMMTGLVCITPGAGL), 309–329 (WAAVVMGIFAGSVPWFTMMIL), 343–363 (LAVFHTHAVAGLLGGILTGLL), and 399–419 (FVIAWNLVVTTAILLGIGLFI). Residues 454-470 (RHDLSRGGGGGDRDGPA) are compositionally biased toward basic and acidic residues. The disordered stretch occupies residues 454-473 (RHDLSRGGGGGDRDGPAGER).

It belongs to the ammonia transporter channel (TC 1.A.11.2) family. In terms of tissue distribution, expressed in roots and leaf blades and sheaths.

The protein localises to the cell membrane. In terms of biological role, involved in ammonium transport. In Oryza sativa subsp. japonica (Rice), this protein is Ammonium transporter 2 member 1 (AMT2-1).